We begin with the raw amino-acid sequence, 224 residues long: ATP-dependent dethiobiotin synthetase BioD (224 aa).

13-18 (NVGKTI) lines the ATP pocket. Thr17 contributes to the Mg(2+) binding site. Lys38 is a catalytic residue. Position 42 (Ser42) interacts with substrate. ATP-binding positions include Asp55, 116–119 (EGAG), 176–177 (NN), and Asn211. Mg(2+)-binding residues include Asp55 and Glu116.

This sequence belongs to the dethiobiotin synthetase family. Homodimer. Mg(2+) serves as cofactor.

Its subcellular location is the cytoplasm. The enzyme catalyses (7R,8S)-7,8-diammoniononanoate + CO2 + ATP = (4R,5S)-dethiobiotin + ADP + phosphate + 3 H(+). It participates in cofactor biosynthesis; biotin biosynthesis; biotin from 7,8-diaminononanoate: step 1/2. In terms of biological role, catalyzes a mechanistically unusual reaction, the ATP-dependent insertion of CO2 between the N7 and N8 nitrogen atoms of 7,8-diaminopelargonic acid (DAPA, also called 7,8-diammoniononanoate) to form a ureido ring. This Buchnera aphidicola subsp. Acyrthosiphon pisum (strain APS) (Acyrthosiphon pisum symbiotic bacterium) protein is ATP-dependent dethiobiotin synthetase BioD.